Here is a 602-residue protein sequence, read N- to C-terminus: DNA ligase (602 aa).

E262 provides a ligand contact to ATP. K264 functions as the N6-AMP-lysine intermediate in the catalytic mechanism. The ATP site is built by R269, R284, E314, F354, R431, and K437.

Belongs to the ATP-dependent DNA ligase family. As to quaternary structure, monomer. Requires Mg(2+) as cofactor. Mn(2+) serves as cofactor.

It catalyses the reaction ATP + (deoxyribonucleotide)n-3'-hydroxyl + 5'-phospho-(deoxyribonucleotide)m = (deoxyribonucleotide)n+m + AMP + diphosphate.. The enzyme catalyses ADP + (deoxyribonucleotide)n-3'-hydroxyl + 5'-phospho-(deoxyribonucleotide)m = (deoxyribonucleotide)n+m + AMP + phosphate.. It carries out the reaction GTP + (deoxyribonucleotide)n-3'-hydroxyl + 5'-phospho-(deoxyribonucleotide)m = (deoxyribonucleotide)n+m + GMP + diphosphate.. Its activity is regulated as follows. Inhibited in the presence of 100 mM KCl, NaCl or NH(4)Cl. DNA ligase that seals nicks in double-stranded DNA during DNA replication, DNA recombination and DNA repair. Can also use ADP, but not NAD(+). In Aeropyrum pernix (strain ATCC 700893 / DSM 11879 / JCM 9820 / NBRC 100138 / K1), this protein is DNA ligase.